A 248-amino-acid polypeptide reads, in one-letter code: Trypsin I-P38 (248 aa).

Residues 1-15 (MKFLVLVAFLGVAVA) form the signal peptide. The propeptide at 16 to 25 (FPISDEDDDK) is activation peptide. The Peptidase S1 domain maps to 26-246 (IVGGYSCARS…YVSWIKTTMS (221 aa)). Intrachain disulfides connect cysteine 32-cysteine 162, cysteine 50-cysteine 66, cysteine 134-cysteine 235, cysteine 141-cysteine 208, cysteine 173-cysteine 187, and cysteine 198-cysteine 222. The active-site Charge relay system is histidine 65. Residues glutamate 77, asparagine 79, and glutamate 87 each coordinate Ca(2+). Aspartate 109 acts as the Charge relay system in catalysis. The active-site Charge relay system is serine 202.

Belongs to the peptidase S1 family. The cofactor is Ca(2+). High levels are seen in the pancreas while lower levels are found in the liver, spleen and thymus.

Its subcellular location is the secreted. It is found in the extracellular space. The enzyme catalyses Preferential cleavage: Arg-|-Xaa, Lys-|-Xaa.. This Gallus gallus (Chicken) protein is Trypsin I-P38.